A 74-amino-acid polypeptide reads, in one-letter code: Sec-independent protein translocase protein TatA (74 aa).

Residues 1–21 (MGGISIWNLVIIVLLVVLLFG) form a helical membrane-spanning segment. Residues 51 to 74 (AEFEKVEQKTAESTEQKAKEKEQA) form a disordered region.

It belongs to the TatA/E family. In terms of assembly, the Tat system comprises two distinct complexes: a TatABC complex, containing multiple copies of TatA, TatB and TatC subunits, and a separate TatA complex, containing only TatA subunits. Substrates initially bind to the TatABC complex, which probably triggers association of the separate TatA complex to form the active translocon.

It localises to the cell inner membrane. Part of the twin-arginine translocation (Tat) system that transports large folded proteins containing a characteristic twin-arginine motif in their signal peptide across membranes. TatA could form the protein-conducting channel of the Tat system. The protein is Sec-independent protein translocase protein TatA of Glaesserella parasuis serovar 5 (strain SH0165) (Haemophilus parasuis).